The chain runs to 828 residues: Kinesin-associated protein 3 (828 aa).

3 ARM repeats span residues 332 to 372 (YVEN…NLSF), 373 to 411 (DTDL…HVSQ), and 577 to 611 (DDSC…CQIV).

Heterotrimer of a 115 kDa subunit (KAP115) and two kinesin-like subunits of 95 kDa (KRP95) and 85 kDa (KRP85).

In terms of biological role, binds to the tail domain of the KRP85/KRP95 heterodimer to form a heterotrimeric kinesin-II complex and may regulate the spindle vesicle targeting of this complex. This is Kinesin-associated protein 3 (KAP115) from Strongylocentrotus purpuratus (Purple sea urchin).